Consider the following 195-residue polypeptide: FMN-dependent NADH:quinone oxidoreductase (195 aa).

Residues S10, 16-18 (SQS), and 91-94 (MYNF) each bind FMN.

The protein belongs to the azoreductase type 1 family. As to quaternary structure, homodimer. It depends on FMN as a cofactor.

It carries out the reaction 2 a quinone + NADH + H(+) = 2 a 1,4-benzosemiquinone + NAD(+). The enzyme catalyses N,N-dimethyl-1,4-phenylenediamine + anthranilate + 2 NAD(+) = 2-(4-dimethylaminophenyl)diazenylbenzoate + 2 NADH + 2 H(+). Functionally, quinone reductase that provides resistance to thiol-specific stress caused by electrophilic quinones. Its function is as follows. Also exhibits azoreductase activity. Catalyzes the reductive cleavage of the azo bond in aromatic azo compounds to the corresponding amines. The chain is FMN-dependent NADH:quinone oxidoreductase from Aeromonas salmonicida (strain A449).